The sequence spans 226 residues: Endonuclease V (226 aa).

Mg(2+) contacts are provided by D43 and D109.

Belongs to the endonuclease V family. Mg(2+) is required as a cofactor.

The protein localises to the cytoplasm. The catalysed reaction is Endonucleolytic cleavage at apurinic or apyrimidinic sites to products with a 5'-phosphate.. In terms of biological role, DNA repair enzyme involved in the repair of deaminated bases. Selectively cleaves double-stranded DNA at the second phosphodiester bond 3' to a deoxyinosine leaving behind the intact lesion on the nicked DNA. This chain is Endonuclease V, found in Kosmotoga olearia (strain ATCC BAA-1733 / DSM 21960 / TBF 19.5.1).